Consider the following 220-residue polypeptide: Endonuclease NucS (220 aa).

Belongs to the NucS endonuclease family.

It is found in the cytoplasm. Its function is as follows. Cleaves both 3' and 5' ssDNA extremities of branched DNA structures. The chain is Endonuclease NucS from Parafrankia sp. (strain EAN1pec).